The chain runs to 294 residues: 4-hydroxy-tetrahydrodipicolinate synthase (294 aa).

Residue Thr-45 coordinates pyruvate. Tyr-133 functions as the Proton donor/acceptor in the catalytic mechanism. Catalysis depends on Lys-161, which acts as the Schiff-base intermediate with substrate. Position 203 (Ile-203) interacts with pyruvate.

The protein belongs to the DapA family. In terms of assembly, homotetramer; dimer of dimers.

The protein localises to the cytoplasm. The catalysed reaction is L-aspartate 4-semialdehyde + pyruvate = (2S,4S)-4-hydroxy-2,3,4,5-tetrahydrodipicolinate + H2O + H(+). It functions in the pathway amino-acid biosynthesis; L-lysine biosynthesis via DAP pathway; (S)-tetrahydrodipicolinate from L-aspartate: step 3/4. Functionally, catalyzes the condensation of (S)-aspartate-beta-semialdehyde [(S)-ASA] and pyruvate to 4-hydroxy-tetrahydrodipicolinate (HTPA). The sequence is that of 4-hydroxy-tetrahydrodipicolinate synthase from Shewanella pealeana (strain ATCC 700345 / ANG-SQ1).